The sequence spans 257 residues: Succinate dehydrogenase subunit 5, mitochondrial (257 aa).

A mitochondrion-targeting transit peptide spans 1–89 (MGTLGRAIHT…AMGMGQVRRF (89 aa)).

Component of complex II composed of eight subunits in plants: four classical SDH subunits SDH1, SDH2, SDH3 and SDH4 (a flavoprotein (FP), an iron-sulfur protein (IP), and a cytochrome b composed of a large and a small subunit.), as well as four subunits unknown in mitochondria from bacteria and heterotrophic eukaryotes.

It localises to the mitochondrion inner membrane. It functions in the pathway carbohydrate metabolism; tricarboxylic acid cycle. The sequence is that of Succinate dehydrogenase subunit 5, mitochondrial from Arabidopsis thaliana (Mouse-ear cress).